Here is a 613-residue protein sequence, read N- to C-terminus: Probable hydrolase clz13 (613 aa).

Positions 1–25 are cleaved as a signal peptide; sequence MCLLSMRFTVAILLVLLSHCGGSHA. Residues Asn-61, Asn-89, Asn-286, Asn-422, Asn-456, Asn-477, and Asn-581 are each glycosylated (N-linked (GlcNAc...) asparagine).

Belongs to the beta-lactamase family.

It participates in secondary metabolite biosynthesis. In terms of biological role, probable hydrolase; part of the gene cluster that mediates the biosynthesis of squalestatin S1 (SQS1, also known as zaragozic acid A), a heavily oxidized fungal polyketide that offers potent cholesterol lowering activity by targeting squalene synthase (SS). SQS1 is composed of a 2,8-dioxobicyclic[3.2.1]octane-3,4,5-tricarboxyclic acid core that is connected to two lipophilic polyketide arms. These initial steps feature the priming of an unusual benzoic acid starter unit onto the highly reducing polyketide synthase clz14, followed by oxaloacetate extension and product release to generate a tricarboxylic acid containing product. The phenylalanine ammonia lyase (PAL) clz10 and the acyl-CoA ligase clz12 are involved in transforming phenylalanine into benzoyl-CoA. The citrate synthase-like protein clz17 is involved in connecting the C-alpha-carbons of the hexaketide chain and oxaloacetate to afford the tricarboxylic acid unit. The potential hydrolytic enzymes, clz11 and clz13, are in close proximity to pks2 and may participate in product release. On the other side, the tetraketide arm is synthesized by a the squalestatin tetraketide synthase clz2 and enzymatically esterified to the core in the last biosynthetic step, by the acetyltransferase clz6. The biosynthesis of the tetraketide must involve 3 rounds of chain extension. After the first and second rounds methyl-transfer occurs, and in all rounds of extension the ketoreductase and dehydratase are active. The enoyl reductase and C-MeT of clz2 are not active in the final round of extension. The acetyltransferase clz6 appears to have a broad substrate selectivity for its acyl CoA substrate, allowing the in vitro synthesis of novel squalestatins. The biosynthesis of SQS1 requires several oxidative steps likely performed by oxidoreductases clz3, clz15 and clz16. Finally, in support of the identification of the cluster as being responsible for SQS1 production, the cluster contains a gene encoding a putative squalene synthase (SS) clz20, suggesting a likely mechanism for self-resistance. This chain is Probable hydrolase clz13, found in Cochliobolus lunatus (Filamentous fungus).